A 407-amino-acid polypeptide reads, in one-letter code: MTQLINVNSRSYRLSSAPTIVICVDGCEQEYINQAIQAGQTPFLAELTGFGTVLTGDCVVPSFTNPNNLSIVTGAPPSVHGICGNFFFDQETQEEVLMNDAKYLRAPTILAEMAKAGQLVAVVTAKDKLRNLLGHQLKGICFSAEKADQVNLEEHGVENILARVGMPVPSVYSADLSEFVFAAGLSLLTNERPDFMYLSTTDYVQHKHAPGTPEANAFYAMMDSYFKRYHEEGAIVAITADHGMNAKTDAIGRPNILFLQDLLDAQYGARRTRVLLPITDPYVVHHGALGSYATVYLRDAVPQRDAIDFLAGIAGVEAVLTRSQACQRFELPEDRIGDLVVLGERLTVLGSAADKHDLSGLTVPLRSHGGVSEQKVPLIFNRKLVGLDSFDRLRNFDIIDLALNHLA.

The Zn(2+) site is built by D25, T64, D202, H206, D241, H242, and H368. T64 and D202 together coordinate substrate. Substrate-binding residues include H242 and H368.

The protein belongs to the alkaline phosphatase family. PhnA subfamily. Homodimer. Zn(2+) serves as cofactor.

The catalysed reaction is phosphonoacetate + H2O = acetate + phosphate + H(+). Specifically hydrolyzes phosphonoacetate. Does not have activity on other organophosphonates or acetates. The sequence is that of Phosphonoacetate hydrolase from Pseudomonas cedrina.